The chain runs to 147 residues: MKVEIFCDGACSGNPGVGGWGSILRYGDTVKELSGADGDTTNNRMEMTAAIEALASLKRPCEVVLTTDSQYLVKGMTEWMSGWIRKGWVNSKKEPVLNRELWERLLALSKIHKIRWAWVRGHNGHPENERCDELARAAIEVFKGRKP.

Residues aspartate 8, glutamate 46, aspartate 68, and aspartate 132 each coordinate Mg(2+).

It belongs to the RNase H family. In terms of assembly, monomer. Mg(2+) serves as cofactor.

It localises to the cytoplasm. The enzyme catalyses Endonucleolytic cleavage to 5'-phosphomonoester.. Functionally, endonuclease that specifically degrades the RNA of RNA-DNA hybrids. This is Ribonuclease H from Geotalea uraniireducens (strain Rf4) (Geobacter uraniireducens).